Here is a 269-residue protein sequence, read N- to C-terminus: Eukaryotic translation initiation factor 3 subunit G-1 (269 aa).

An RRM domain is found at 188 to 266 (AAIRISNLSE…LILSVEWSKP (79 aa)).

It belongs to the eIF-3 subunit G family. Component of the eukaryotic translation initiation factor 3 (eIF-3) complex. The eIF-3 complex interacts with pix.

It localises to the cytoplasm. RNA-binding component of the eukaryotic translation initiation factor 3 (eIF-3) complex, which is involved in protein synthesis of a specialized repertoire of mRNAs and, together with other initiation factors, stimulates binding of mRNA and methionyl-tRNAi to the 40S ribosome. The eIF-3 complex specifically targets and initiates translation of a subset of mRNAs involved in cell proliferation. This subunit can bind 18S rRNA. This Drosophila persimilis (Fruit fly) protein is Eukaryotic translation initiation factor 3 subunit G-1.